A 539-amino-acid chain; its full sequence is GMP synthase [glutamine-hydrolyzing] (539 aa).

A Glutamine amidotransferase type-1 domain is found at 4-202 (KILILDFGSQ…VLQIAGCKPD (199 aa)). The Nucleophile role is filled by cysteine 81. Residues histidine 176 and glutamate 178 contribute to the active site. The 193-residue stretch at 203–395 (WVMRDHIEEA…LGLPPEMVYR (193 aa)) folds into the GMPS ATP-PPase domain. 230 to 236 (SGGVDSS) contributes to the ATP binding site.

In terms of assembly, homodimer.

It carries out the reaction XMP + L-glutamine + ATP + H2O = GMP + L-glutamate + AMP + diphosphate + 2 H(+). It functions in the pathway purine metabolism; GMP biosynthesis; GMP from XMP (L-Gln route): step 1/1. Catalyzes the synthesis of GMP from XMP. The chain is GMP synthase [glutamine-hydrolyzing] from Cupriavidus taiwanensis (strain DSM 17343 / BCRC 17206 / CCUG 44338 / CIP 107171 / LMG 19424 / R1) (Ralstonia taiwanensis (strain LMG 19424)).